A 322-amino-acid chain; its full sequence is Lung adenoma susceptibility protein 2 homolog (322 aa).

Positions methionine 1–serine 31 are cleaved as a signal peptide. The span at threonine 148–glycine 157 shows a compositional bias: basic residues. 2 disordered regions span residues threonine 148–threonine 175 and phenylalanine 228–serine 248. Serine 161 bears the Phosphoserine mark. The span at serine 236 to lysine 247 shows a compositional bias: polar residues.

The protein localises to the secreted. Functionally, might play a role in cell proliferation. The protein is Lung adenoma susceptibility protein 2 homolog (LAS2) of Macaca fascicularis (Crab-eating macaque).